We begin with the raw amino-acid sequence, 253 residues long: AA9 family lytic polysaccharide monooxygenase F (253 aa).

An N-terminal signal peptide occupies residues M1–A16. H17 contributes to the Cu(2+) binding site. An N-linked (GlcNAc...) asparagine glycan is attached at N22. 2 cysteine pairs are disulfide-bonded: C75–C193 and C163–C253. Cu(2+) is bound at residue H105. Residue N143 is glycosylated (N-linked (GlcNAc...) asparagine). O2 contacts are provided by H179 and Q188. Y190 is a binding site for Cu(2+).

It belongs to the polysaccharide monooxygenase AA9 family. The cofactor is Cu(2+).

The protein resides in the secreted. The enzyme catalyses [(1-&gt;4)-beta-D-glucosyl]n+m + reduced acceptor + O2 = 4-dehydro-beta-D-glucosyl-[(1-&gt;4)-beta-D-glucosyl]n-1 + [(1-&gt;4)-beta-D-glucosyl]m + acceptor + H2O.. Its function is as follows. Lytic polysaccharide monooxygenase (LPMO) that depolymerizes crystalline and amorphous polysaccharides via the oxidation of scissile alpha- or beta-(1-4)-glycosidic bonds, yielding C1 or C4 oxidation products. Catalysis by LPMOs requires the reduction of the active-site copper from Cu(II) to Cu(I) by a reducing agent and H(2)O(2) or O(2) as a cosubstrate. In Podospora anserina (strain S / ATCC MYA-4624 / DSM 980 / FGSC 10383) (Pleurage anserina), this protein is AA9 family lytic polysaccharide monooxygenase F.